We begin with the raw amino-acid sequence, 502 residues long: ATP synthase subunit alpha, sodium ion specific (502 aa).

Position 169–176 (169–176 (GDRQTGKT)) interacts with ATP.

Belongs to the ATPase alpha/beta chains family. In terms of assembly, F-type ATPases have 2 components, CF(1) - the catalytic core - and CF(0) - the membrane proton channel. CF(1) has five subunits: alpha(3), beta(3), gamma(1), delta(1), epsilon(1). CF(0) has three main subunits: a, b and c.

Its subcellular location is the cell membrane. The catalysed reaction is 4 Na(+)(in) + ATP + H2O = 4 Na(+)(out) + ADP + phosphate + H(+). With respect to regulation, inhibited by nitrate. Its function is as follows. Produces ATP from ADP in the presence of a sodium ion gradient across the membrane. The alpha chain is a regulatory subunit. This Acetobacterium woodii (strain ATCC 29683 / DSM 1030 / JCM 2381 / KCTC 1655 / WB1) protein is ATP synthase subunit alpha, sodium ion specific.